A 353-amino-acid polypeptide reads, in one-letter code: Phospho-N-acetylmuramoyl-pentapeptide-transferase (353 aa).

The next 10 helical transmembrane spans lie at 24-44 (LGFF…ILWA), 66-86 (TPTM…VLCA), 88-108 (LGNL…FVGF), 129-149 (FGML…KGLD), 160-180 (PLFE…FLST), 192-212 (GLAS…VYVA), 229-249 (VGEL…FLWY), 256-276 (VFMG…NAIV), 281-301 (ILLV…ILQV), and 330-350 (KVIV…LLSL).

It belongs to the glycosyltransferase 4 family. MraY subfamily. Requires Mg(2+) as cofactor.

Its subcellular location is the cell inner membrane. The enzyme catalyses UDP-N-acetyl-alpha-D-muramoyl-L-alanyl-gamma-D-glutamyl-meso-2,6-diaminopimeloyl-D-alanyl-D-alanine + di-trans,octa-cis-undecaprenyl phosphate = di-trans,octa-cis-undecaprenyl diphospho-N-acetyl-alpha-D-muramoyl-L-alanyl-D-glutamyl-meso-2,6-diaminopimeloyl-D-alanyl-D-alanine + UMP. It functions in the pathway cell wall biogenesis; peptidoglycan biosynthesis. Functionally, catalyzes the initial step of the lipid cycle reactions in the biosynthesis of the cell wall peptidoglycan: transfers peptidoglycan precursor phospho-MurNAc-pentapeptide from UDP-MurNAc-pentapeptide onto the lipid carrier undecaprenyl phosphate, yielding undecaprenyl-pyrophosphoryl-MurNAc-pentapeptide, known as lipid I. This chain is Phospho-N-acetylmuramoyl-pentapeptide-transferase, found in Helicobacter pylori (strain HPAG1).